The sequence spans 509 residues: Pentatricopeptide repeat-containing protein At2g13420, mitochondrial (509 aa).

A mitochondrion-targeting transit peptide spans 1 to 19 (MLLLKQISPPFHLHQLRRR). PPR repeat units lie at residues 172-202 (RLVE…RKEE), 206-240 (DEKV…GIEP), 241-285 (NVVT…GIEP), 286-320 (DVTS…GISP), 321-355 (TIET…GISP), 356-390 (SSAT…LCKP), 391-425 (STQT…ETGP), and 426-460 (DLDS…GFLP).

The protein belongs to the PPR family. P subfamily.

Its subcellular location is the mitochondrion. This chain is Pentatricopeptide repeat-containing protein At2g13420, mitochondrial, found in Arabidopsis thaliana (Mouse-ear cress).